The sequence spans 98 residues: MDCCASRGCSVPTGPATTICSSDKSCRCGVCLPSTCPHTVWLLEPTCCDNCPPPCHIPQPCVPTCFLLNSCQPTPGLETLNLTTFTQPCCEPCLPRGC.

Tandem repeats lie at residues 3 to 7, 47 to 51, and 89 to 93. The 3 X 5 AA repeats of C-C-X(3) stretch occupies residues 3 to 59; sequence CCASRGCSVPTGPATTICSSDKSCRCGVCLPSTCPHTVWLLEPTCCDNCPPPCHIPQ.

Belongs to the KRTAP type 3 family. In terms of assembly, interacts with hair keratins. Localized to the upper cortex of the hair shaft.

In terms of biological role, in the hair cortex, hair keratin intermediate filaments are embedded in an interfilamentous matrix, consisting of hair keratin-associated proteins (KRTAP), which are essential for the formation of a rigid and resistant hair shaft through their extensive disulfide bond cross-linking with abundant cysteine residues of hair keratins. The matrix proteins include the high-sulfur and high-glycine-tyrosine keratins. The protein is Keratin-associated protein 3-3 (KRTAP3-3) of Homo sapiens (Human).